A 453-amino-acid polypeptide reads, in one-letter code: Crh-like protein CRH11 (453 aa).

Positions 1–21 are cleaved as a signal peptide; the sequence is MKFTTLATIASTLLFAANANA. Cys-24 and Cys-32 are disulfide-bonded. A GH16 domain is found at 28 to 227; that stretch reads KSSDCSPVPA…WAGGITDYSQ (200 aa). Glu-119 (nucleophile) is an active-site residue. Glu-123 serves as the catalytic Proton donor. Glu-123, Trp-204, and Thr-215 together coordinate chitin. Disordered stretches follow at residues 281–343, 362–397, and 410–430; these read LESG…SEKS, KTTV…PASA, and GDAA…TENN. Low complexity-rich tracts occupy residues 286–343, 363–397, and 412–425; these read SVDS…SEKS, TTVT…PASA, and AAPS…PSVS. N-linked (GlcNAc...) asparagine glycosylation is present at Asn-290. Asn-430 carries GPI-anchor amidated asparagine lipidation. The propeptide at 431 to 453 is removed in mature form; sequence GAVSVAKTTSLFGFVALIGFLFV.

It belongs to the glycosyl hydrolase 16 family. CRH1 subfamily. In terms of processing, the GPI-anchor is attached to the protein in the endoplasmic reticulum and serves to target the protein to the cell surface. There, the glucosamine-inositol phospholipid moiety is cleaved off and the GPI-modified mannoprotein is covalently attached via its lipidless GPI glycan remnant to the 1,6-beta-glucan of the outer cell wall layer.

Its subcellular location is the secreted. The protein resides in the cell wall. It is found in the membrane. It carries out the reaction Random endo-hydrolysis of N-acetyl-beta-D-glucosaminide (1-&gt;4)-beta-linkages in chitin and chitodextrins.. Dual chitinase/transglycosylase that plays a role in cell wall architecture. Chitinase and transglycosylase activities are coupled. Required for the polysaccharide cross-linking at the septa and the cell wall. More specifically, transfers chitin to 1,6-beta-glucan in the cell wall. Plays an important role in fungal pathogenesis via its functions in cell wall assembly and regeneration, filamentation, and adherence to host cells. This chain is Crh-like protein CRH11 (CRH11), found in Candida albicans (strain SC5314 / ATCC MYA-2876) (Yeast).